The primary structure comprises 446 residues: Adenylosuccinate synthetase (446 aa).

GTP contacts are provided by residues 20–26 (GDEGKGK) and 48–50 (GHT). Catalysis depends on Asp21, which acts as the Proton acceptor. Positions 21 and 48 each coordinate Mg(2+). Residues 21 to 24 (DEGK), 46 to 49 (NAGH), Thr137, Arg151, Gln232, Thr247, and Arg319 contribute to the IMP site. The Proton donor role is filled by His49. Residue 315–321 (SVTGRPR) participates in substrate binding. GTP-binding positions include Arg321, 347-349 (KLD), and 429-431 (STG).

It belongs to the adenylosuccinate synthetase family. Homodimer. Mg(2+) is required as a cofactor.

The protein localises to the cytoplasm. It carries out the reaction IMP + L-aspartate + GTP = N(6)-(1,2-dicarboxyethyl)-AMP + GDP + phosphate + 2 H(+). Its pathway is purine metabolism; AMP biosynthesis via de novo pathway; AMP from IMP: step 1/2. Functionally, plays an important role in the de novo pathway of purine nucleotide biosynthesis. Catalyzes the first committed step in the biosynthesis of AMP from IMP. The sequence is that of Adenylosuccinate synthetase from Polynucleobacter necessarius subsp. necessarius (strain STIR1).